Consider the following 495-residue polypeptide: uncharacterized protein (495 aa).

A CHY-type zinc finger spans residues 389-457 (PLPNNGACEH…KDATCPHCGN (69 aa)). Residues C396, H398, C410, C411, C417, C420, H421, H427, C437, C440, C452, and C455 each coordinate Zn(2+). Basic and acidic residues predominate over residues 473–483 (GMRDRVRMSRK). A disordered region spans residues 473–495 (GMRDRVRMSRKDPRKYKRKHHGN). The span at 484–495 (DPRKYKRKHHGN) shows a compositional bias: basic residues.

Its subcellular location is the cytoplasm. This is an uncharacterized protein from Schizosaccharomyces pombe (strain 972 / ATCC 24843) (Fission yeast).